Consider the following 363-residue polypeptide: uncharacterized protein (363 aa).

The first 20 residues, 1-20 (MKRAPLITGLLLISTSCAYA), serve as a signal peptide directing secretion.

It belongs to the fimbrial protein family.

The protein resides in the fimbrium. In terms of biological role, part of the yraHIJK fimbrial operon. Could contribute to adhesion to various surfaces in specific environmental niches. Increases adhesion to eukaryotic T24 bladder epithelial cells in the absence of fim operon. This is an uncharacterized protein from Escherichia coli (strain K12).